The chain runs to 115 residues: Probable non-functional T cell receptor beta variable 7-3 (115 aa).

Positions 1–21 (MGTRLLCWAALCLLGADHTGA) are cleaved as a signal peptide. In terms of domain architecture, Ig-like spans 22–115 (GVSQTPSNKV…SAAYLRASSL (94 aa)).

Most probably, the alpha-beta TR is not assembled due to incorrect folding of the beta chain. Alpha-beta TR is a heterodimer composed of an alpha and beta chain; disulfide-linked. The alpha-beta TR is associated with the transmembrane signaling CD3 coreceptor proteins to form the TR-CD3 (TcR or TCR). The assembly of alpha-beta TR heterodimers with CD3 occurs in the endoplasmic reticulum where a single alpha-beta TR heterodimer associates with one CD3D-CD3E heterodimer, one CD3G-CD3E heterodimer and one CD247 homodimer forming a stable octameric structure. CD3D-CD3E and CD3G-CD3E heterodimers preferentially associate with TR alpha and TR beta chains, respectively. The association of the CD247 homodimer is the last step of TcR assembly in the endoplasmic reticulum and is required for transport to the cell surface.

It localises to the cell membrane. Functionally, probable non-functional open reading frame (ORF) of V region of the variable domain of T cell receptor (TR) beta chain. Non-functional ORF generally cannot participate in the synthesis of a productive T cell receptor (TR) chain due to altered V-(D)-J or switch recombination and/or splicing site (at mRNA level) and/or conserved amino acid change (protein level). Alpha-beta T cell receptors are antigen specific receptors which are essential to the immune response and are present on the cell surface of T lymphocytes. Recognize peptide-major histocompatibility (MH) (pMH) complexes that are displayed by antigen presenting cells (APC), a prerequisite for efficient T cell adaptive immunity against pathogens. Binding of alpha-beta TR to pMH complex initiates TR-CD3 clustering on the cell surface and intracellular activation of LCK that phosphorylates the ITAM motifs of CD3G, CD3D, CD3E and CD247 enabling the recruitment of ZAP70. In turn ZAP70 phosphorylates LAT, which recruits numerous signaling molecules to form the LAT signalosome. The LAT signalosome propagates signal branching to three major signaling pathways, the calcium, the mitogen-activated protein kinase (MAPK) kinase and the nuclear factor NF-kappa-B (NF-kB) pathways, leading to the mobilization of transcription factors that are critical for gene expression and essential for T cell growth and differentiation. The T cell repertoire is generated in the thymus, by V-(D)-J rearrangement. This repertoire is then shaped by intrathymic selection events to generate a peripheral T cell pool of self-MH restricted, non-autoaggressive T cells. Post-thymic interaction of alpha-beta TR with the pMH complexes shapes TR structural and functional avidity. This is Probable non-functional T cell receptor beta variable 7-3 from Homo sapiens (Human).